Consider the following 510-residue polypeptide: 2,3-bisphosphoglycerate-independent phosphoglycerate mutase (510 aa).

Asp12 is a Mn(2+) binding site. Tyr36 is modified (phosphotyrosine). Ser62 lines the Mn(2+) pocket. Ser62 acts as the Phosphoserine intermediate in catalysis. Substrate contacts are provided by residues His123, 153–154, Arg185, Arg191, 261–264, and Lys336; these read RD and RPDR. Mn(2+) contacts are provided by Asp403, His407, Asp444, His445, and His462.

It belongs to the BPG-independent phosphoglycerate mutase family. In terms of assembly, monomer. It depends on Mn(2+) as a cofactor.

It catalyses the reaction (2R)-2-phosphoglycerate = (2R)-3-phosphoglycerate. It participates in carbohydrate degradation; glycolysis; pyruvate from D-glyceraldehyde 3-phosphate: step 3/5. Essential for rapid growth and for sporulation. Catalyzes the interconversion of 2-phosphoglycerate and 3-phosphoglycerate. The polypeptide is 2,3-bisphosphoglycerate-independent phosphoglycerate mutase (Shouchella clausii (strain KSM-K16) (Alkalihalobacillus clausii)).